A 271-amino-acid polypeptide reads, in one-letter code: Phosphatidylinositol transfer protein beta isoform (271 aa).

Lys-215 carries the N6-acetyllysine modification. Ser-262 carries the post-translational modification Phosphoserine.

This sequence belongs to the PtdIns transfer protein family. PI transfer class I subfamily. Post-translationally, constitutive phosphorylation of Ser-262 has no effect on phospholipid transfer activity but is required for Golgi targeting.

It localises to the golgi apparatus. The protein localises to the golgi apparatus membrane. The protein resides in the endoplasmic reticulum membrane. The enzyme catalyses a 1,2-diacyl-sn-glycero-3-phosphocholine(in) = a 1,2-diacyl-sn-glycero-3-phosphocholine(out). It catalyses the reaction a 1,2-diacyl-sn-glycero-3-phospho-(1D-myo-inositol)(in) = a 1,2-diacyl-sn-glycero-3-phospho-(1D-myo-inositol)(out). It carries out the reaction an N-(acyl)-sphingosylphosphocholine(in) = an N-(acyl)-sphingosylphosphocholine(out). Catalyzes the transfer of phosphatidylinositol, phosphatidylcholine and sphingomyelin between membranes. Required for COPI-mediated retrograde transport from the Golgi to the endoplasmic reticulum; phosphatidylinositol and phosphatidylcholine transfer activity is essential for this function. The sequence is that of Phosphatidylinositol transfer protein beta isoform (PITPNB) from Bos taurus (Bovine).